The primary structure comprises 98 residues: Aspartyl/glutamyl-tRNA(Asn/Gln) amidotransferase subunit C (98 aa).

This sequence belongs to the GatC family. Heterotrimer of A, B and C subunits.

It carries out the reaction L-glutamyl-tRNA(Gln) + L-glutamine + ATP + H2O = L-glutaminyl-tRNA(Gln) + L-glutamate + ADP + phosphate + H(+). It catalyses the reaction L-aspartyl-tRNA(Asn) + L-glutamine + ATP + H2O = L-asparaginyl-tRNA(Asn) + L-glutamate + ADP + phosphate + 2 H(+). Allows the formation of correctly charged Asn-tRNA(Asn) or Gln-tRNA(Gln) through the transamidation of misacylated Asp-tRNA(Asn) or Glu-tRNA(Gln) in organisms which lack either or both of asparaginyl-tRNA or glutaminyl-tRNA synthetases. The reaction takes place in the presence of glutamine and ATP through an activated phospho-Asp-tRNA(Asn) or phospho-Glu-tRNA(Gln). The sequence is that of Aspartyl/glutamyl-tRNA(Asn/Gln) amidotransferase subunit C from Kocuria rhizophila (strain ATCC 9341 / DSM 348 / NBRC 103217 / DC2201).